The primary structure comprises 28 residues: Probable small spore coat assembly protein B (28 aa).

Residues 4–24 (VFAGGFALLVVLFILLIIIGA) traverse the membrane as a helical segment.

This sequence belongs to the SscA family.

It localises to the membrane. This chain is Probable small spore coat assembly protein B, found in Bacillus subtilis (strain 168).